The following is a 290-amino-acid chain: Acetylglutamate kinase (290 aa).

Residues 65-66, arginine 87, and asparagine 186 contribute to the substrate site; that span reads GG.

The protein belongs to the acetylglutamate kinase family. ArgB subfamily.

It localises to the cytoplasm. The catalysed reaction is N-acetyl-L-glutamate + ATP = N-acetyl-L-glutamyl 5-phosphate + ADP. It functions in the pathway amino-acid biosynthesis; L-arginine biosynthesis; N(2)-acetyl-L-ornithine from L-glutamate: step 2/4. Catalyzes the ATP-dependent phosphorylation of N-acetyl-L-glutamate. This Mycobacterium sp. (strain JLS) protein is Acetylglutamate kinase.